The sequence spans 134 residues: Large ribosomal subunit protein bL20 (134 aa).

It belongs to the bacterial ribosomal protein bL20 family.

Its function is as follows. Binds directly to 23S ribosomal RNA and is necessary for the in vitro assembly process of the 50S ribosomal subunit. It is not involved in the protein synthesizing functions of that subunit. The sequence is that of Large ribosomal subunit protein bL20 from Rhizobium rhizogenes (strain K84 / ATCC BAA-868) (Agrobacterium radiobacter).